The sequence spans 132 residues: 3-aminoacrylate deaminase RutC (132 aa).

The protein belongs to the RutC family.

The enzyme catalyses (Z)-3-aminoacrylate + H2O + H(+) = 3-oxopropanoate + NH4(+). Its function is as follows. Involved in pyrimidine catabolism. Catalyzes the deamination of 3-aminoacrylate to malonic semialdehyde, a reaction that can also occur spontaneously. RutC may facilitate the reaction and modulate the metabolic fitness, rather than catalyzing essential functions. In Cronobacter sakazakii (strain ATCC BAA-894) (Enterobacter sakazakii), this protein is 3-aminoacrylate deaminase RutC.